Reading from the N-terminus, the 227-residue chain is (S)-2-haloacid dehalogenase (227 aa).

Asp-10 (nucleophile) is an active-site residue. An (S)-2-haloacid is bound by residues 11 to 12, Arg-41, and 118 to 119; these read LY and SN. The important for catalytic activity stretch occupies residues 175–180; the sequence is SSNAWD.

This sequence belongs to the HAD-like hydrolase superfamily. S-2-haloalkanoic acid dehalogenase family. As to quaternary structure, homotetramer.

The catalysed reaction is an (S)-2-haloacid + H2O = a (2R)-2-hydroxycarboxylate + a halide anion + H(+). It carries out the reaction (S)-2-chloropropanoate + H2O = (R)-lactate + chloride + H(+). Its function is as follows. Catalyzes the hydrolytic dehalogenation of small (S)-2-haloalkanoic acids to yield the corresponding (R)-2-hydroxyalkanoic acids. Acts on acids of short chain lengths, C(2) to C(4), with inversion of configuration at C-2. Active with 2-halogenated carboxylic acids and converts only the S-isomer (or L-isomer) of 2-chloropropionic acid with inversion of configuration to produce R-lactate (or D-isomer). In Pseudomonas putida (Arthrobacter siderocapsulatus), this protein is (S)-2-haloacid dehalogenase.